A 394-amino-acid polypeptide reads, in one-letter code: Phosphoglycerate kinase (394 aa).

Residues 21 to 23, Arg36, 59 to 62, Arg118, and Arg151 contribute to the substrate site; these read DFN and HLGR. Phosphoserine is present on Ser183. ATP contacts are provided by Lys201 and Gly292. Thr299 carries the post-translational modification Phosphothreonine. ATP contacts are provided by residues Glu323 and 350-353; that span reads GGDS.

This sequence belongs to the phosphoglycerate kinase family. Monomer.

The protein localises to the cytoplasm. The catalysed reaction is (2R)-3-phosphoglycerate + ATP = (2R)-3-phospho-glyceroyl phosphate + ADP. It functions in the pathway carbohydrate degradation; glycolysis; pyruvate from D-glyceraldehyde 3-phosphate: step 2/5. The chain is Phosphoglycerate kinase from Anoxybacillus flavithermus (strain DSM 21510 / WK1).